Consider the following 638-residue polypeptide: DNA gyrase subunit B (638 aa).

The region spanning 422 to 536 (SELYIVEGDS…NGYVYIAQPP (115 aa)) is the Toprim domain. 3 residues coordinate Mg(2+): Glu428, Asp501, and Asp503.

This sequence belongs to the type II topoisomerase GyrB family. In terms of assembly, heterotetramer, composed of two GyrA and two GyrB chains. In the heterotetramer, GyrA contains the active site tyrosine that forms a transient covalent intermediate with DNA, while GyrB binds cofactors and catalyzes ATP hydrolysis. The cofactor is Mg(2+). It depends on Mn(2+) as a cofactor. Ca(2+) serves as cofactor.

The protein localises to the cytoplasm. The catalysed reaction is ATP-dependent breakage, passage and rejoining of double-stranded DNA.. In terms of biological role, a type II topoisomerase that negatively supercoils closed circular double-stranded (ds) DNA in an ATP-dependent manner to modulate DNA topology and maintain chromosomes in an underwound state. Negative supercoiling favors strand separation, and DNA replication, transcription, recombination and repair, all of which involve strand separation. Also able to catalyze the interconversion of other topological isomers of dsDNA rings, including catenanes and knotted rings. Type II topoisomerases break and join 2 DNA strands simultaneously in an ATP-dependent manner. The protein is DNA gyrase subunit B of Bacillus subtilis (strain 168).